A 329-amino-acid chain; its full sequence is CDP-6-deoxy-L-threo-D-glycero-4-hexulose-3-dehydrase reductase (329 aa).

The 2Fe-2S ferredoxin-type domain occupies 2–93 (SLNVKLHPSG…ELDVNYYPEL (92 aa)). 4 residues coordinate [2Fe-2S] cluster: C37, C42, C45, and C75. Residues 98–197 (KKTYPCKLDS…EGPQGTFFVR (100 aa)) enclose the FAD-binding FR-type domain.

Monomer.

It functions in the pathway nucleotide-sugar biosynthesis; CDP-ascarylose biosynthesis. The protein operates within bacterial outer membrane biogenesis; lipopolysaccharide biosynthesis. Functionally, participates in the conversion of CDP-6-deoxy-D-glycero-L-threo-4-hexulose to 3,6-dideoxy-D-glycero-D-glycero-4-hexulose together with CDP-6-deoxy-D-glycero-L-threo-4-hexulose-3-dehydrase (E1) in two consecutive steps. The detailed mechanism of E3 is not yet resolved. In Yersinia pseudotuberculosis serotype I (strain IP32953), this protein is CDP-6-deoxy-L-threo-D-glycero-4-hexulose-3-dehydrase reductase (ascD).